The sequence spans 257 residues: Homeobox protein goosecoid (257 aa).

Positions 160 to 219 (KRRHRTIFTDEQLEALENLFQETKYPDVGTREQLARKVHLREEKVEVWFKNRRAKWRRQK) form a DNA-binding region, homeobox. The tract at residues 213-257 (AKWRRQKRSSSEESENAEKWNKTSSSKASPEKREEEGKSDLDSDS) is disordered. Positions 241–257 (SPEKREEEGKSDLDSDS) are enriched in basic and acidic residues.

It belongs to the paired homeobox family. Bicoid subfamily.

It localises to the nucleus. Its function is as follows. Regulates chordin (CHRD). May play a role in spatial programing within discrete embryonic fields or lineage compartments during organogenesis. In concert with NKX3-2, plays a role in defining the structural components of the middle ear; required for the development of the entire tympanic ring. Probably involved in the regulatory networks that define neural crest cell fate specification and determine mesoderm cell lineages in mammals. The chain is Homeobox protein goosecoid (GSC) from Pongo pygmaeus (Bornean orangutan).